The sequence spans 91 residues: DNA-directed RNA polymerase subunit omega (91 aa).

Belongs to the RNA polymerase subunit omega family. In terms of assembly, the RNAP catalytic core consists of 2 alpha, 1 beta, 1 beta' and 1 omega subunit. When a sigma factor is associated with the core the holoenzyme is formed, which can initiate transcription.

It carries out the reaction RNA(n) + a ribonucleoside 5'-triphosphate = RNA(n+1) + diphosphate. Promotes RNA polymerase assembly. Latches the N- and C-terminal regions of the beta' subunit thereby facilitating its interaction with the beta and alpha subunits. This chain is DNA-directed RNA polymerase subunit omega, found in Nocardia farcinica (strain IFM 10152).